The following is a 319-amino-acid chain: Serpentine receptor class X-43 (319 aa).

7 consecutive transmembrane segments (helical) span residues Val-28–Phe-48, Ala-67–Ile-87, Tyr-95–Met-115, Ile-138–Val-158, Phe-164–Leu-184, Thr-194–Phe-214, and Phe-267–Phe-287.

It belongs to the G-protein coupled receptor 1 family. In terms of tissue distribution, expressed in ASI sensory neurons.

The protein resides in the cell membrane. It localises to the perikaryon. The protein localises to the cell projection. It is found in the cilium. In terms of biological role, receptor for the ascaroside pheromone icas#9 which suppresses exploratory forgaging behavior. In response to ascaroside icas#9, may furthermore play a role in the expression of genes in the TGF-beta signaling pathway, such as daf-7, and in insulin signaling pathway, such as daf-28, which may in turn contribute to exploratory behavior. The chain is Serpentine receptor class X-43 from Caenorhabditis elegans.